Reading from the N-terminus, the 62-residue chain is Alpha-elapitoxin-Pc1 (62 aa).

4 cysteine pairs are disulfide-bonded: C3-C24, C17-C41, C43-C54, and C55-C60.

It belongs to the three-finger toxin family. Short-chain subfamily. Type I alpha-neurotoxin sub-subfamily. As to expression, expressed by the venom gland.

The protein resides in the secreted. Its function is as follows. Bird-specific neurotoxin (tested on chicken) that acts as pseudo-irreversible antagonists at the nicotinic acetylcholine receptor (nAChR) of the skeletal neuromuscular junction. Has no significant effect on the electrically-induced twitches of the rat isolated phrenic nerve-diaphragm preparation. The sequence is that of Alpha-elapitoxin-Pc1 from Pseudechis colletti (Collett's snake).